The chain runs to 262 residues: Small ribosomal subunit protein eS4 (262 aa).

The 64-residue stretch at 42–105 (LPLVVFLRNR…NEHFRLVYDV (64 aa)) folds into the S4 RNA-binding domain. The KOW domain occupies 178 to 211 (GRLVMVTGGRNLGRVGVIVHREKHEGGFDLVHIK).

Belongs to the eukaryotic ribosomal protein eS4 family. In terms of assembly, component of the small ribosomal subunit. Mature ribosomes consist of a small (40S) and a large (60S) subunit. The 40S subunit contains about 32 different proteins and 1 molecule of RNA (18S). The 60S subunit contains 45 different proteins and 3 molecules of RNA (25S, 5.8S and 5S).

The protein localises to the cytoplasm. Functionally, component of the ribosome, a large ribonucleoprotein complex responsible for the synthesis of proteins in the cell. The small ribosomal subunit (SSU) binds messenger RNAs (mRNAs) and translates the encoded message by selecting cognate aminoacyl-transfer RNA (tRNA) molecules. The large subunit (LSU) contains the ribosomal catalytic site termed the peptidyl transferase center (PTC), which catalyzes the formation of peptide bonds, thereby polymerizing the amino acids delivered by tRNAs into a polypeptide chain. The nascent polypeptides leave the ribosome through a tunnel in the LSU and interact with protein factors that function in enzymatic processing, targeting, and the membrane insertion of nascent chains at the exit of the ribosomal tunnel. The polypeptide is Small ribosomal subunit protein eS4 (RPS42) (Candida albicans (strain SC5314 / ATCC MYA-2876) (Yeast)).